The chain runs to 133 residues: P2Y purinoceptor 2 (133 aa).

The Cytoplasmic segment spans residues 1–26; it reads ISVHRCLGVLRPLHSLRWGRARYARR. Residues 27 to 47 traverse the membrane as a helical segment; that stretch reads VAFAVWVLVLYCQAPVLYFVT. The Extracellular portion of the chain corresponds to 48-74; sequence TSTRSSRIICHDTSARELFSHFVAYSS. The chain crosses the membrane as a helical span at residues 75-95; the sequence is VMLSLLFAAPFAVILVCYVLM. The Cytoplasmic segment spans residues 96-116; that stretch reads ARRLLKPAYGTSGGLPRAKRK. A helical transmembrane segment spans residues 117 to 133; that stretch reads SVRTIAIVLTVFVLCFL.

This sequence belongs to the G-protein coupled receptor 1 family.

The protein localises to the cell membrane. Receptor for ATP and UTP coupled to G-proteins that activate a phosphatidylinositol-calcium second messenger system. The chain is P2Y purinoceptor 2 (P2RY2) from Bos taurus (Bovine).